Reading from the N-terminus, the 538-residue chain is Methyl-accepting chemotaxis protein NahY (538 aa).

Topologically, residues 1 to 9 (MQQFTIRTR) are cytoplasmic. A helical membrane pass occupies residues 10–30 (LLMLVGAMFIGFITIELMGFS). At 31-187 (ALQRGVASLN…AVVLYDSSRT (157 aa)) the chain is on the periplasmic side. A helical membrane pass occupies residues 188 to 208 (MLALLLLGILICGGVFATRLI). The HAMP domain maps to 209–261 (RSIIHPLTTLKDAAARVALGDLSQSIQVSGRNEVTDVQQSVQAMQANLRNTLQ). Residues 209-538 (RSIIHPLTTL…LNNLVNRFSM (330 aa)) lie on the Cytoplasmic side of the membrane. In terms of domain architecture, Methyl-accepting transducer spans 266 to 502 (SAAQLAAAAE…EVDRNLVAIS (237 aa)).

It belongs to the methyl-accepting chemotaxis (MCP) protein family.

It is found in the cell inner membrane. In terms of biological role, chemotactic-signal transducers respond to changes in the concentration of attractants and repellents in the environment, transduce a signal from the outside to the inside of the cell, and facilitate sensory adaptation through the variation of the level of methylation. Chemoreceptor for naphthalene or a related compound. May facilitate biodegradation. The chain is Methyl-accepting chemotaxis protein NahY (nahY) from Pseudomonas putida (Arthrobacter siderocapsulatus).